The primary structure comprises 87 residues: Small ribosomal subunit protein uS17 (87 aa).

It belongs to the universal ribosomal protein uS17 family. As to quaternary structure, part of the 30S ribosomal subunit.

In terms of biological role, one of the primary rRNA binding proteins, it binds specifically to the 5'-end of 16S ribosomal RNA. The sequence is that of Small ribosomal subunit protein uS17 from Anoxybacillus flavithermus (strain DSM 21510 / WK1).